Here is a 72-residue protein sequence, read N- to C-terminus: MAKEDSIEMQGTILETLPNTMFRVELENGHVLTAHISGKMRKNYIRILTGDKVTVEMTPYDLTKGRIIFRAR.

The S1-like domain maps to methionine 1–arginine 72.

This sequence belongs to the IF-1 family. As to quaternary structure, component of the 30S ribosomal translation pre-initiation complex which assembles on the 30S ribosome in the order IF-2 and IF-3, IF-1 and N-formylmethionyl-tRNA(fMet); mRNA recruitment can occur at any time during PIC assembly.

It is found in the cytoplasm. Functionally, one of the essential components for the initiation of protein synthesis. Stabilizes the binding of IF-2 and IF-3 on the 30S subunit to which N-formylmethionyl-tRNA(fMet) subsequently binds. Helps modulate mRNA selection, yielding the 30S pre-initiation complex (PIC). Upon addition of the 50S ribosomal subunit IF-1, IF-2 and IF-3 are released leaving the mature 70S translation initiation complex. The sequence is that of Translation initiation factor IF-1 from Actinobacillus succinogenes (strain ATCC 55618 / DSM 22257 / CCUG 43843 / 130Z).